Reading from the N-terminus, the 334-residue chain is UDP-N-acetylglucosamine 4,6-dehydratase (inverting) (334 aa).

NADP(+)-binding positions include 13 to 16, 37 to 42, 61 to 62, Ala-81, Lys-85, and 123 to 124; these read TGSF, SRDELK, DV, and LS. Residue Lys-85 participates in substrate binding. Lys-127 is a catalytic residue. The NADP(+) site is built by Tyr-135 and Lys-139. Asn-167 contributes to the substrate binding site. 168–172 is an NADP(+) binding site; sequence VVGSR. Val-175, Thr-193, Arg-252, and Glu-255 together coordinate substrate.

The protein belongs to the polysaccharide synthase family. Homohexamer. Requires NADP(+) as cofactor.

The enzyme catalyses UDP-N-acetyl-alpha-D-glucosamine = UDP-2-acetamido-2,6-dideoxy-beta-L-arabino-hex-4-ulose + H2O. In terms of biological role, catalyzes the first step in the biosynthesis of pseudaminic acid, a sialic-acid-like sugar that is used to modify flagellin. Has both C6 dehydratase and C5 epimerase activities that result in the production of both UDP-2-acetamido-2,6-dideoxy-beta-L-arabino-4-hexulose and UDP-2-acetamido-2,6-dideoxy-alpha-D-xylo-4-hexulose. The sequence is that of UDP-N-acetylglucosamine 4,6-dehydratase (inverting) (pseB) from Campylobacter jejuni subsp. jejuni serotype O:2 (strain ATCC 700819 / NCTC 11168).